A 132-amino-acid polypeptide reads, in one-letter code: Capsid protein (132 aa).

This sequence belongs to the Leviviricetes capsid protein family. In terms of assembly, homodimer. The capsid protein dimer binds to the viral RNA via an operator hairpin, but also many other RNA sequences in the viral genome.

It is found in the virion. In terms of biological role, capsid protein self-assembles to form an icosahedral capsid with a T=3 symmetry, about 26 nm in diameter, and consisting of 89 capsid proteins dimers (178 capsid proteins). Involved in viral genome encapsidation through the interaction between a capsid protein dimer and the multiple packaging signals present in the RNA genome. Binding of the capsid proteins to the viral RNA induces a conformational change required for efficient T=3 shell formation. The capsid also contains 1 copy of the A2 maturation protein. Acts as a translational repressor of viral replicase synthesis late in infection. This latter function is the result of capsid protein interaction with an RNA hairpin which contains the replicase ribosome-binding site. The polypeptide is Capsid protein (Enterobacteria phage SP (Bacteriophage SP)).